Consider the following 648-residue polypeptide: Transketolase (648 aa).

His22 is a substrate binding site. Residues His62 and 109-111 contribute to the thiamine diphosphate site; that span reads GPL. A Mg(2+)-binding site is contributed by Asp150. 2 residues coordinate thiamine diphosphate: Gly151 and Asn180. Mg(2+) is bound by residues Asn180 and Val182. Residues His252, Arg345, and Ser372 each coordinate substrate. His252 contributes to the thiamine diphosphate binding site. The active-site Proton donor is Glu397. A thiamine diphosphate-binding site is contributed by Phe423. 3 residues coordinate substrate: His447, Asp455, and Arg506.

The protein belongs to the transketolase family. As to quaternary structure, homodimer. Mg(2+) is required as a cofactor. It depends on Ca(2+) as a cofactor. The cofactor is Mn(2+). Requires Co(2+) as cofactor. Thiamine diphosphate serves as cofactor.

The catalysed reaction is D-sedoheptulose 7-phosphate + D-glyceraldehyde 3-phosphate = aldehydo-D-ribose 5-phosphate + D-xylulose 5-phosphate. In terms of biological role, catalyzes the transfer of a two-carbon ketol group from a ketose donor to an aldose acceptor, via a covalent intermediate with the cofactor thiamine pyrophosphate. The sequence is that of Transketolase (tkt) from Mycoplasma genitalium (strain ATCC 33530 / DSM 19775 / NCTC 10195 / G37) (Mycoplasmoides genitalium).